The following is a 701-amino-acid chain: Elongation factor G (701 aa).

The tr-type G domain maps to 8–290 (KRYRNIGICA…AVIEFLPAPD (283 aa)). GTP is bound by residues 17–24 (AHVDAGKT), 88–92 (DTPGH), and 142–145 (NKMD).

This sequence belongs to the TRAFAC class translation factor GTPase superfamily. Classic translation factor GTPase family. EF-G/EF-2 subfamily.

It localises to the cytoplasm. Catalyzes the GTP-dependent ribosomal translocation step during translation elongation. During this step, the ribosome changes from the pre-translocational (PRE) to the post-translocational (POST) state as the newly formed A-site-bound peptidyl-tRNA and P-site-bound deacylated tRNA move to the P and E sites, respectively. Catalyzes the coordinated movement of the two tRNA molecules, the mRNA and conformational changes in the ribosome. This chain is Elongation factor G, found in Marinobacter nauticus (strain ATCC 700491 / DSM 11845 / VT8) (Marinobacter aquaeolei).